The sequence spans 415 residues: ATP-dependent RNA helicase RhlB (415 aa).

Residues Lys9 to Ala37 carry the Q motif motif. In terms of domain architecture, Helicase ATP-binding spans Leu40–Val219. Ala53 to Thr60 contacts ATP. Positions Asp165–Asp168 match the DEAD box motif. The 146-residue stretch at Arg245–Leu390 folds into the Helicase C-terminal domain. Residues Pro396–Gly415 are disordered. Basic residues predominate over residues Arg398–Gly415.

This sequence belongs to the DEAD box helicase family. RhlB subfamily. Component of the RNA degradosome, which is a multiprotein complex involved in RNA processing and mRNA degradation.

Its subcellular location is the cytoplasm. The catalysed reaction is ATP + H2O = ADP + phosphate + H(+). In terms of biological role, DEAD-box RNA helicase involved in RNA degradation. Has RNA-dependent ATPase activity and unwinds double-stranded RNA. This is ATP-dependent RNA helicase RhlB from Sodalis glossinidius (strain morsitans).